Consider the following 487-residue polypeptide: MPMIPPALRRTQAAATPTTSSPAASSSTTATLDSQSLCALPRIRVSASTLNSIVTPVKKITSETDVEAWKASAAYSIYTLFLQRVCEACVGKPTRLPTRSTDAPVTPVDKLVSLLWELDSWTQEIEPHEKPQRFGNLAFRDWGARLEERIDSLLSDLLPSRLHAFAVELRVYLLDSFGSFTRIDYGSGHELAFFAWLCFLYRLGFFDASEEQEQDETLADIQVEERIGLDIFPLYLMVVWKLQDRYGLEPAGSHGVWGLDDFQFLPYVIGAAQLRRQSGLRPNQVIGASSHASILQTQLATRTDPASLISTTLVLPASSLVGTQVEVPLPNLYLSSLLRIHVLKRGPFHEHSPLLNDIASSVPNWLKVYFGMLKMYAAECLAKKVVVQHFAFGGVGWVWTHQAHSELPRLATPSAPVAARRHLPLGGIQGNMTSMGVPTPRITRPPATPDSFDHPLRLPPRSTPSRPSTTPSVPPLAASTRPAPKPE.

Disordered regions lie at residues 1–28 (MPMI…SSST) and 426–487 (GGIQ…PKPE).

It belongs to the PTPA-type PPIase family.

The protein localises to the cytoplasm. The protein resides in the nucleus. It catalyses the reaction [protein]-peptidylproline (omega=180) = [protein]-peptidylproline (omega=0). Its function is as follows. PPIases accelerate the folding of proteins. It catalyzes the cis-trans isomerization of proline imidic peptide bonds in oligopeptides. Acts as a regulatory subunit for PP2A-like phosphatases modulating their activity or substrate specificity, probably by inducing a conformational change in the catalytic subunit, a direct target of the PPIase. Can reactivate inactive phosphatase PP2A-phosphatase methylesterase complexes (PP2Ai) in presence of ATP and Mg(2+) by dissociating the inactive form from the complex. The polypeptide is Serine/threonine-protein phosphatase 2A activator 1 (RRD1) (Mycosarcoma maydis (Corn smut fungus)).